A 678-amino-acid chain; its full sequence is MWKLLLWVGLVLVLKHHDGAAHKLVCYFTNWAHSRPGPASILPHDLDPFLCTHLIFAFASMNNNQIVAKDLQDEKILYPEFNKLKERNRELKTLLSIGGWNFGTSRFTTMLSTFANREKFIASVISLLRTHDFDGLDLFFLYPGLRGSPMHDRWTFLFLIEELLFAFRKEALLTMRPRLLLSAAVSGVPHIVQTSYDVRFLGRLLDFINVLSYDLHGSWERFTGHNSPLFSLPEDPKSSAYAMNYWRKLGAPSEKLIMGIPTYGRTFRLLKASKNGLQARAIGPASPGKYTKQEGFLAYFEICSFVWGAKKHWIDYQYVPYANKGKEWVGYDNAISFSYKAWFIRREHFGGAMVWTLDMDDVRGTFCGTGPFPLVYVLNDILVRAEFSSTSLPQFWLSSAVNSSSTDPERLAVTTAWTTDSKILPPGGEAGVTEIHGKCENMTITPRGTTVTPTKETVSLGKHTVALGEKTEITGAMTMTSVGHQSMTPGEKALTPVGHQSVTTGQKTLTSVGYQSVTPGEKTLTPVGHQSVTPVSHQSVSPGGTTMTPVHFQTETLRQNTVAPRRKAVAREKVTVPSRNISVTPEGQTMPLRGENLTSEVGTHPRMGNLGLQMEAENRMMLSSSPVIQLPEQTPLAFDNRFVPIYGNHSSVNSVTPQTSPLSLKKEIPENSAVDEEA.

Positions 1–21 are cleaved as a signal peptide; sequence MWKLLLWVGLVLVLKHHDGAA. The GH18 domain occupies 22–385; the sequence is HKLVCYFTNW…YVLNDILVRA (364 aa). Cys26 and Cys51 form a disulfide bridge. Chitin-binding positions include 71-72, 98-101, Tyr142, 211-214, and Trp355; these read LQ, GGWN, and LSYD. N-linked (GlcNAc...) asparagine glycosylation is found at Asn402 and Asn441. The interval 524–544 is disordered; the sequence is LTPVGHQSVTPVSHQSVSPGG. Polar residues predominate over residues 528-544; the sequence is GHQSVTPVSHQSVSPGG. N-linked (GlcNAc...) asparagine glycans are attached at residues Asn580, Asn596, and Asn648. The segment at 581-606 is disordered; sequence ISVTPEGQTMPLRGENLTSEVGTHPR. Residues 651 to 662 are compositionally biased toward polar residues; that stretch reads SVNSVTPQTSPL. The segment at 651 to 678 is disordered; sequence SVNSVTPQTSPLSLKKEIPENSAVDEEA.

The protein belongs to the glycosyl hydrolase 18 family. In terms of tissue distribution, oviduct.

The protein localises to the cytoplasmic vesicle. The protein resides in the secretory vesicle. Functionally, binds to oocyte zona pellucida in vivo. May play a role in the fertilization process and/or early embryonic development. In Homo sapiens (Human), this protein is Oviduct-specific glycoprotein (OVGP1).